The primary structure comprises 266 residues: Integral membrane protein 2B (266 aa).

Topologically, residues 1–54 (MVKVTFNSALAQKEAKKDEPKSSEEALIVPPDAVAVDCKDPGDVVPVGQRRAWC) are cytoplasmic. The chain crosses the membrane as a helical; Signal-anchor for type II membrane protein span at residues 55-75 (WCMCFGLAFMLAGVILGGAYL). The Lumenal portion of the chain corresponds to 76-266 (YKYFALQPDD…KFAVETLICS (191 aa)). The segment at 102-134 (EPSADAPAARYQTIEENIKIFEEDAVEFISVPV) is necessary for interaction with APP and inhibitor effects on APP processing. Positions 137-231 (FADSDPANIV…LCHDKETYKL (95 aa)) constitute a BRICHOS domain. 2 disulfides stabilise this stretch: C164–C223 and C248–C265. Residue N170 is glycosylated (N-linked (GlcNAc...) asparagine).

It belongs to the ITM2 family. In terms of assembly, homodimer; disulfide-linked. Interacts with SPPL2A and SPPL2B. Interacts with APP. Mature BRI2 (mBRI2) interacts with the APP amyloid-beta A4 protein; the interaction occurs at the cell surface and in the endocytic compartments and enable alpha- and beta-secretase-induced APP cleavage inhibition. Mature BRI2 (mBRI2) interacts with the APP C99; the interaction occurs in the endocytic compartments and enable gamma-secretase-induced C99 cleavage inhibition. May form heterodimers with Bri23 peptide and APP amyloid-beta protein 40. Interacts with ADAM7 in sperm; the interaction increases following capacitation. Post-translationally, the ectodomain C-terminal part of the imBRI2 is processed by furin producing a secreted Bri23 peptide and a mature BRI2, membrane form (mBRI2). The remaining part of the ectodomain of mBRI2 containing the BRICHOS domain is cleaved by ADAM10 and is secreted (BRI2C, soluble form). The membrane-bound N-terminal fragment (BRI2C, membrane form) is further proteolytically processed by SPPL2A and SPPL2B through regulated intramembrane proteolysis producing a secreted C-peptide and a BRI2 intracellular domain (BRI2 ICD) released in the cytosol. Shedding by ADAM10 facilitates intramembrane cleavage but is not absolutely required for BRI2 ICD generation. In terms of processing, glycosylation at Asn-170 is important for cell surface localization, but doesn't affect furin- and ADAM10-induced proteolytic processing. Expressed in the brain, testis, testicular sperm, epididymis and mature epididymal sperm (at protein level).

The protein localises to the golgi apparatus membrane. It localises to the cell membrane. Its subcellular location is the endosome membrane. It is found in the secreted. Functionally, plays a regulatory role in the processing of the amyloid-beta A4 precursor protein (APP) and acts as an inhibitor of the amyloid-beta peptide aggregation and fibrils deposition. Plays a role in the induction of neurite outgrowth. Functions as a protease inhibitor by blocking access of secretases to APP cleavage sites. Mature BRI2 (mBRI2) functions as a modulator of the amyloid-beta A4 precursor protein (APP) processing leading to a strong reduction in the secretion of secretase-processed amyloid-beta protein 40 and amyloid-beta protein 42. Its function is as follows. Bri23 peptide prevents aggregation of APP amyloid-beta protein 42 into toxic oligomers. This chain is Integral membrane protein 2B (Itm2b), found in Mus musculus (Mouse).